The chain runs to 191 residues: Small ribosomal subunit protein uS9c (191 aa).

Residues threonine 166–arginine 191 are disordered. Residues lysine 172–arginine 191 show a composition bias toward basic residues.

It belongs to the universal ribosomal protein uS9 family.

It localises to the plastid. The protein resides in the chloroplast. In Chlamydomonas reinhardtii (Chlamydomonas smithii), this protein is Small ribosomal subunit protein uS9c (rps9).